Reading from the N-terminus, the 527-residue chain is UDP-glucuronosyltransferase 2A1 (527 aa).

Residues 1–20 (MLNNLLLFSLQISLIGTTLG) form the signal peptide. The Lumenal portion of the chain corresponds to 21 to 491 (GNVLIWPMEG…TWFQYHSLDV (471 aa)). Asn-49, Leu-313, and Asn-347 each carry an N-linked (GlcNAc...) asparagine glycan. A helical transmembrane segment spans residues 492 to 512 (IGFLLVCVTTAIFLVIQCCLF). At 513–527 (SCQKFGKIGKKKKRE) the chain is on the cytoplasmic side.

This sequence belongs to the UDP-glycosyltransferase family. Olfactory epithelium, brain and fetal lung. Not present in liver.

The protein resides in the membrane. It localises to the endoplasmic reticulum membrane. It carries out the reaction glucuronate acceptor + UDP-alpha-D-glucuronate = acceptor beta-D-glucuronoside + UDP + H(+). The catalysed reaction is 16beta,17beta-estriol + UDP-alpha-D-glucuronate = 16beta,17beta-estriol 16-O-(beta-D-glucuronate) + UDP + H(+). The enzyme catalyses 16alpha,17alpha-estriol + UDP-alpha-D-glucuronate = 16alpha,17alpha-estriol 16-O-(beta-D-glucuronate) + UDP + H(+). It catalyses the reaction 17alpha-estradiol + UDP-alpha-D-glucuronate = 17alpha-estradiol 17-O-(beta-D-glucuronate) + UDP + H(+). It carries out the reaction 17alpha-estradiol + UDP-alpha-D-glucuronate = 17alpha-estradiol 3-O-(beta-D-glucuronate) + UDP + H(+). The catalysed reaction is 17beta-estradiol + UDP-alpha-D-glucuronate = 17beta-estradiol 3-O-(beta-D-glucuronate) + UDP + H(+). The enzyme catalyses 17beta-estradiol + UDP-alpha-D-glucuronate = 17beta-estradiol 17-O-(beta-D-glucuronate) + UDP + H(+). It catalyses the reaction testosterone + UDP-alpha-D-glucuronate = testosterone 17-O-(beta-D-glucuronate) + UDP + H(+). It carries out the reaction epitestosterone + UDP-alpha-D-glucuronate = epitestosterone 17-O-(beta-D-glucuronate) + UDP + H(+). The catalysed reaction is lithocholate + UDP-alpha-D-glucuronate = lithocholoyl-3-O-(beta-D-glucuronate) + UDP + H(+). The enzyme catalyses lithocholate + UDP-alpha-D-glucuronate = lithocholoyl-24-O-(beta-D-glucuronate) + UDP. It catalyses the reaction deoxycholate + UDP-alpha-D-glucuronate = deoxycholoyl-24-O-(beta-D-glucuronate) + UDP. It carries out the reaction hyodeoxycholate + UDP-alpha-D-glucuronate = hyodeoxycholoyl-24-O-(beta-D-glucuronate) + UDP. The catalysed reaction is hyocholate + UDP-alpha-D-glucuronate = hyocholoyl-24-O-(beta-D-glucuronate) + UDP. Its function is as follows. UDP-glucuronosyltransferase (UGT) that catalyzes phase II biotransformation reactions in which lipophilic substrates are conjugated with glucuronic acid to increase the metabolite's water solubility, thereby facilitating excretion into either the urine or bile. Essential for the elimination and detoxification of drugs, xenobiotics and endogenous compounds. Catalyzes the glucuronidation of endogenous steroid hormones such as androgens (testosterone and epitestosterone) and estrogens (estradiol and epiestriol). Contributes to bile acid (BA) detoxification by catalyzing the glucuronidation of BA substrates, which are natural detergents for dietary lipids absorption. Shows a high affinity to aliphatic odorants such as citronellol as well as olfactory tissue specificity, and therefore may be involved in olfaction. Shows a potential role in detoxification of toxic waste compounds in the amniotic fluid before birth, and air-born chemical after birth. The polypeptide is UDP-glucuronosyltransferase 2A1 (Homo sapiens (Human)).